Here is a 331-residue protein sequence, read N- to C-terminus: Gamma-parvin (331 aa).

Position 1 is an N-acetylmethionine (Met-1). Residues 17 to 39 are disordered; that stretch reads EPPAEEELSKGGKKKYLPPTSRK. Calponin-homology (CH) domains follow at residues 44-151 and 210-317; these read EELQ…KRFQ and NAVK…CKHT.

This sequence belongs to the parvin family. Interacts with ILK; the interaction promotes the establishment of cell polarity required for leukocyte migration. Interacts with ARHGEF6; the guanine nucleotide exchange factor activity of ARHGEF6 is essential for the PARVG-induced enhancement of cell spreading. As to expression, expressed predominantly in lymphoid organs, including spleen, thymus, lymph node, bone marrow and peripheral blood leukocytes and moderately in the digestive tract, including stomach, duodenum, jejunum, ileum, ileocecum and appendix, as well as in lung and liver. Also expressed in tumors, but at a lower level than in the corresponding normal tissues.

The protein resides in the cell junction. It is found in the focal adhesion. The protein localises to the cell membrane. It localises to the cytoplasm. Its subcellular location is the cytoskeleton. Plays a role with ILK in promoting the cell adhesion and spreading of leukocytes. This is Gamma-parvin (PARVG) from Homo sapiens (Human).